A 1426-amino-acid chain; its full sequence is Nephrocystin-4 (1426 aa).

S142 is subject to Phosphoserine. Disordered regions lie at residues 450 to 536 (GSEE…SPAQ) and 896 to 935 (RQGKGPQDVSRESDATRRRKLERMRSVRLQEAGGDLGRRG). The span at 474 to 486 (KPPTSPSSPPAPV) shows a compositional bias: pro residues. The span at 503-536 (SISQLAASPRSPTQHCLARPTSQLPHGSQASPAQ) shows a compositional bias: polar residues. Residues 823-1426 (LTLANVGHPC…EAFCVKVIYQ (604 aa)) form a sufficient for basal bodies localization region.

The protein belongs to the NPHP4 family. As to quaternary structure, interacts with NPHP1. Interacts with NPHP1 and RPGRIP1L/NPHP8; NPHP1, NPHP4 and RPGRIP1L are proposed to form a functional NPHP1-4-8 module localized to cell-cell contacts and the ciliary transition zone; NPHP4 mediates the interaction between NPHP1 and RPGRIP1L. Interacts with IQCB1/NPHP5; the interaction likely requires additional interactors. Interacts with RPGRIP1, CEP164, JADE1, PALS1, INADL, PARD6A, INVS, DVL2, LATS1. Interacts with INTU; INTU mediates the interaction between NPHP4 and DAAM1. Interacts with SPATA7. In terms of tissue distribution, expressed in kidney, skeletal muscle, heart and liver, and to a lesser extent in brain and lung.

It localises to the cytoplasm. It is found in the cytoskeleton. Its subcellular location is the cilium basal body. The protein localises to the microtubule organizing center. The protein resides in the centrosome. It localises to the cell junction. It is found in the tight junction. Its subcellular location is the nucleus. Its function is as follows. Involved in the organization of apical junctions; the function is proposed to implicate a NPHP1-4-8 module. Does not seem to be strictly required for ciliogenesis. Required for building functional cilia. Involved in the organization of the subapical actin network in multiciliated epithelial cells. Seems to recruit INT to basal bodies of motile cilia which subsequently interacts with actin-modifying proteins such as DAAM1. In cooperation with INVS may down-regulate the canonical Wnt pathway and promote the Wnt-PCP pathway by regulating expression and subcellular location of disheveled proteins. Stabilizes protein levels of JADE1 and promotes its translocation to the nucleus leading to cooperative inhibition of canonical Wnt signaling. Acts as a negative regulator of the hippo pathway by association with LATS1 and modifying LATS1-dependent phosphorylation and localization of WWTR1/TAZ. In Homo sapiens (Human), this protein is Nephrocystin-4 (NPHP4).